A 473-amino-acid polypeptide reads, in one-letter code: MAELSIASGIVGLLSLGIQVTQSLISFYSAYKDQDGDLAKITQNFEDLQGIFQSLESAVQDRQSQGDMDEVLKEVDKAMQGCHEIIEELQKECQKLHTDLGLSLKGHIQVAGRRAAYPFRKSTLQKLKEDTARNQNQLDLFLHSLPKDLDETYERILCSIDENYVDDVCRILTLLCFSARPLTINELIDAHAVDLSASPHLDREGRSYEQNDLIDICLGLIEISKTEDSGQQLLIARIAHFSVQEYLQSERIQQQKANRFAIQSGPANTEITQICLVYLLEPMLSSGVLDTIKIKEFPLAHFAAEYWYHHYVNSREGRLKVEELLQRLFQYDTNCFVTWIRIYGLDRQGTLRPNSDYQRPIDDIGSPFYYASLLGLESTLSNMIAAGARDASFLEMVNAQSGEYGNALQAASSGGHWKVVQMLLDQGADVNAQSGRYGNALHAASSRGHKKVVQMLLDHGANVSTQGRELTLW.

A signal peptide spans 1–23 (MAELSIASGIVGLLSLGIQVTQS). 2 ANK repeats span residues 403-432 (EYGNALQAASSGGHWKVVQMLLDQGADVNA) and 436-465 (RYGNALHAASSRGHKKVVQMLLDHGANVST). Asn-462 carries N-linked (GlcNAc...) asparagine glycosylation.

Functionally, part of the gene cluster that mediates the biosynthesis of azaphilone pigments (MonAzPs), a complex mixture of compounds with a common azaphilone skeleton very widely used as food colorants. Seems not to play a direct role in the biosynthesis but might have a regulatorx function. This Monascus ruber (Mold) protein is Azaphilone pigments biosynthesis cluster protein L.